Reading from the N-terminus, the 446-residue chain is Nuclear envelope morphology protein 1 (446 aa).

A disordered region spans residues Val-53 to Lys-80. Over residues Gln-56–Asn-75 the composition is skewed to basic and acidic residues. A helical membrane pass occupies residues Ile-87 to Leu-103. The interval His-132–Leu-168 is disordered. Polar residues predominate over residues Gly-139–Asp-156. In terms of domain architecture, FCP1 homology spans Asn-247–Met-424.

It belongs to the Dullard family. As to quaternary structure, component of the NEM1-SPO7 complex.

The protein resides in the endoplasmic reticulum membrane. Its subcellular location is the nucleus membrane. The catalysed reaction is O-phospho-L-seryl-[protein] + H2O = L-seryl-[protein] + phosphate. It carries out the reaction O-phospho-L-threonyl-[protein] + H2O = L-threonyl-[protein] + phosphate. In terms of biological role, catalytic component of the NEM1-SPO7 complex which acts as a phosphatase and dephosphorylates the phosphatidic acid phosphohydrolase PAH1. Essential for the formation of a spherical nucleus and meiotic division. The NEM1-SPOo7 protein phosphatase is required for efficient mitophagy under prolonged respiration, as well as for reticulophagy and pexophagy. This Saccharomyces cerevisiae (strain ATCC 204508 / S288c) (Baker's yeast) protein is Nuclear envelope morphology protein 1 (NEM1).